We begin with the raw amino-acid sequence, 406 residues long: Elongation factor Tu-B (406 aa).

In terms of domain architecture, tr-type G spans Lys-10–Val-215. Residues Gly-19 to Thr-26 form a G1 region. Gly-19 to Thr-26 is a binding site for GTP. Thr-26 is a binding site for Mg(2+). Residues Gly-61–Asn-65 are G2. Residues Asp-82–Gly-85 form a G3 region. GTP is bound by residues Asp-82–His-86 and Asn-137–Asp-140. The segment at Asn-137 to Asp-140 is G4. Positions Ser-175–Leu-177 are G5. The residue at position 395 (Thr-395) is a Phosphothreonine.

The protein belongs to the TRAFAC class translation factor GTPase superfamily. Classic translation factor GTPase family. EF-Tu/EF-1A subfamily. In terms of assembly, monomer. Post-translationally, phosphorylated on a threonine.

The protein localises to the cytoplasm. It catalyses the reaction GTP + H2O = GDP + phosphate + H(+). In terms of biological role, GTP hydrolase that promotes the GTP-dependent binding of aminoacyl-tRNA to the A-site of ribosomes during protein biosynthesis. Its function is as follows. Protects glycyl-tRNA(Gly) from hydrolysis by E.coli D-aminoacyl-tRNA deacylase (dtd). The sequence is that of Elongation factor Tu-B from Thermus thermophilus (strain ATCC 27634 / DSM 579 / HB8).